The sequence spans 348 residues: Protein RecA (348 aa).

67–74 (GPESSGKT) contacts ATP.

The protein belongs to the RecA family.

The protein resides in the cytoplasm. Can catalyze the hydrolysis of ATP in the presence of single-stranded DNA, the ATP-dependent uptake of single-stranded DNA by duplex DNA, and the ATP-dependent hybridization of homologous single-stranded DNAs. It interacts with LexA causing its activation and leading to its autocatalytic cleavage. This Kineococcus radiotolerans (strain ATCC BAA-149 / DSM 14245 / SRS30216) protein is Protein RecA.